We begin with the raw amino-acid sequence, 580 residues long: Zinc finger protein 271 (580 aa).

C2H2-type zinc fingers lie at residues 78-100 (YNCDECDQSFAWSTGLIRHQRTH), 104-126 (YECEECGKAFRMSSALVLHQRIH), 132-154 (YPCSWCIKSFSRSSDLIKHQRVH), 160-182 (YKCDECGKAFSQSSDLMIHQRIH), 188-210 (YQCSHCSKSFSQHSGMVKHLRIH), 216-238 (YMCNHCYKHFSQSSDLIKHQRIH), 244-266 (YKCDVCGKAFSQSSDRILHQRIH), 272-294 (YPCAQCNKSFSQNSDLIKHRRIH), 300-322 (YKCSECGKAFNQSSVLILHQRIH), 328-350 (YPCNQCTKSFSRLSDLINHQRIH), 356-378 (YPCSQCSKMFSRRSDLVKHYRIH), 384-406 (YECDKCGKTFSQSSNLILHQRIH), 412-434 (YPCNSCSKSFSRGSDLIKHQRVH), 440-462 (YTCNLCSKSFSQSSDLTKHQRVH), 468-490 (YHCSSCNKAFRQSSDLILHHRVH), 496-518 (YACTQCPRSFSQKSDLIKHQRIH), 524-545 (YKCMCGKAFSQCSAFTLHQRIH), and 551-573 (YPCAQCGKSFSQRSDLVNHQRVH).

It belongs to the krueppel C2H2-type zinc-finger protein family. As to expression, selectively expressed in adult testis.

Its subcellular location is the nucleus. In terms of biological role, may act to control gene activity during the pachytene stage of meiotic prophase. May function as a transcription activator. The sequence is that of Zinc finger protein 271 (Znf271) from Mus musculus (Mouse).